Reading from the N-terminus, the 515-residue chain is 1-pyrroline-5-carboxylate dehydrogenase (515 aa).

Catalysis depends on residues Glu-286 and Cys-320.

The protein belongs to the aldehyde dehydrogenase family. RocA subfamily.

It carries out the reaction L-glutamate 5-semialdehyde + NAD(+) + H2O = L-glutamate + NADH + 2 H(+). It functions in the pathway amino-acid degradation; L-proline degradation into L-glutamate; L-glutamate from L-proline: step 2/2. The polypeptide is 1-pyrroline-5-carboxylate dehydrogenase (Geobacillus kaustophilus (strain HTA426)).